The primary structure comprises 377 residues: Chaperone protein DnaJ (377 aa).

One can recognise a J domain in the interval 5-70 (DFYEVLGVER…SKRAAYDQYG (66 aa)). Residues 136 to 214 (GTTVTIRVPT…CHGQGRVEEQ (79 aa)) form a CR-type zinc finger. Zn(2+)-binding residues include C149, C152, C166, C169, C188, C191, C202, and C205. CXXCXGXG motif repeat units lie at residues 149 to 156 (CKTCNGSG), 166 to 173 (CTTCGGIG), 188 to 195 (CPRCHGTG), and 202 to 209 (CGSCHGQG).

Belongs to the DnaJ family. Homodimer. The cofactor is Zn(2+).

The protein resides in the cytoplasm. Functionally, participates actively in the response to hyperosmotic and heat shock by preventing the aggregation of stress-denatured proteins and by disaggregating proteins, also in an autonomous, DnaK-independent fashion. Unfolded proteins bind initially to DnaJ; upon interaction with the DnaJ-bound protein, DnaK hydrolyzes its bound ATP, resulting in the formation of a stable complex. GrpE releases ADP from DnaK; ATP binding to DnaK triggers the release of the substrate protein, thus completing the reaction cycle. Several rounds of ATP-dependent interactions between DnaJ, DnaK and GrpE are required for fully efficient folding. Also involved, together with DnaK and GrpE, in the DNA replication of plasmids through activation of initiation proteins. This chain is Chaperone protein DnaJ, found in Pseudomonas paraeruginosa (strain DSM 24068 / PA7) (Pseudomonas aeruginosa (strain PA7)).